The chain runs to 118 residues: Large ribosomal subunit protein bL20 (118 aa).

This sequence belongs to the bacterial ribosomal protein bL20 family.

Its function is as follows. Binds directly to 23S ribosomal RNA and is necessary for the in vitro assembly process of the 50S ribosomal subunit. It is not involved in the protein synthesizing functions of that subunit. This chain is Large ribosomal subunit protein bL20, found in Bacillus mycoides (strain KBAB4) (Bacillus weihenstephanensis).